The primary structure comprises 608 residues: Amino-acid acetyltransferase, mitochondrial (608 aa).

Positions 402-604 (LNLITEHEKG…DICTRIEPSL (203 aa)) constitute an N-acetyltransferase domain.

Belongs to the acetyltransferase family.

Its subcellular location is the mitochondrion. The catalysed reaction is L-glutamate + acetyl-CoA = N-acetyl-L-glutamate + CoA + H(+). It participates in amino-acid biosynthesis; L-arginine biosynthesis; N(2)-acetyl-L-ornithine from L-glutamate: step 1/4. In terms of biological role, N-acetylglutamate synthase involved in arginine biosynthesis. The protein is Amino-acid acetyltransferase, mitochondrial (ARG2) of Yarrowia lipolytica (strain CLIB 122 / E 150) (Yeast).